The sequence spans 1236 residues: ATP-dependent helicase/nuclease subunit A (1236 aa).

Positions 4–473 (VKWTKEQQQA…VNLFKNFRSR (470 aa)) constitute a UvrD-like helicase ATP-binding domain. 25–32 (AAAGSGKT) provides a ligand contact to ATP. One can recognise a UvrD-like helicase C-terminal domain in the interval 512 to 806 (YEDKSLVGGP…RIMSIHKSKG (295 aa)).

This sequence belongs to the helicase family. AddA subfamily. In terms of assembly, heterodimer of AddA and AddB/RexB. Requires Mg(2+) as cofactor.

The catalysed reaction is Couples ATP hydrolysis with the unwinding of duplex DNA by translocating in the 3'-5' direction.. It carries out the reaction ATP + H2O = ADP + phosphate + H(+). Its function is as follows. The heterodimer acts as both an ATP-dependent DNA helicase and an ATP-dependent, dual-direction single-stranded exonuclease. Recognizes the chi site generating a DNA molecule suitable for the initiation of homologous recombination. The AddA nuclease domain is required for chi fragment generation; this subunit has the helicase and 3' -&gt; 5' nuclease activities. In Clostridium novyi (strain NT), this protein is ATP-dependent helicase/nuclease subunit A.